A 306-amino-acid polypeptide reads, in one-letter code: D-alanine--D-alanine ligase (306 aa).

In terms of domain architecture, ATP-grasp spans 107 to 300; that stretch reads KAAYRTAGLP…FGQLCAWLVE (194 aa). Position 134 to 184 (134 to 184) interacts with ATP; sequence IAPPYVVKPNNEGSSVGIYIVHEATNSPPQLSEEMPAQVMVEAYAPGREMT. Positions 251, 267, and 269 each coordinate Mg(2+).

Belongs to the D-alanine--D-alanine ligase family. Requires Mg(2+) as cofactor. It depends on Mn(2+) as a cofactor.

The protein resides in the cytoplasm. The enzyme catalyses 2 D-alanine + ATP = D-alanyl-D-alanine + ADP + phosphate + H(+). The protein operates within cell wall biogenesis; peptidoglycan biosynthesis. Its function is as follows. Cell wall formation. The chain is D-alanine--D-alanine ligase from Ruegeria sp. (strain TM1040) (Silicibacter sp.).